The primary structure comprises 152 residues: Glycine cleavage system H protein, mitochondrial (152 aa).

The transit peptide at 1-31 directs the protein to the mitochondrion; it reads MALRMWASSTANALRLSSATRPHYSPLSRCF. The Lipoyl-binding domain maps to 53 to 135; that stretch reads VATVGITDHA…YEDGWMIKVK (83 aa). At Lys-94 the chain carries N6-lipoyllysine.

Belongs to the GcvH family. In terms of assembly, the glycine cleavage system is composed of four proteins: P, T, L and H. Requires (R)-lipoate as cofactor.

It localises to the mitochondrion. Functionally, the glycine cleavage system catalyzes the degradation of glycine. The H protein shuttles the methylamine group of glycine from the P protein to the T protein. The chain is Glycine cleavage system H protein, mitochondrial (GDCSH) from Flaveria pubescens (Yellowtops).